Reading from the N-terminus, the 149-residue chain is Calmodulin-2 (149 aa).

Ala-2 is modified (N-acetylalanine). EF-hand domains are found at residues 8 to 43 (EQIA…LGQN), 44 to 79 (PTEA…KMKD), 81 to 116 (DSEE…LGEK), and 117 to 149 (LTDE…MLAK). The Ca(2+) site is built by Asp-21, Asp-23, Asp-25, Cys-27, Glu-32, Asp-57, Asp-59, Asn-61, Thr-63, Glu-68, Asp-94, Asp-96, Asn-98, Tyr-100, and Asp-105. The residue at position 116 (Lys-116) is an N6,N6,N6-trimethyllysine. Ca(2+) contacts are provided by Asp-130, Asp-132, Asp-134, Gln-136, and Glu-141.

The protein belongs to the calmodulin family.

Calmodulin mediates the control of a large number of enzymes, ion channels and other proteins by Ca(2+). Among the enzymes to be stimulated by the calmodulin-Ca(2+) complex are a number of protein kinases and phosphatases. This Petunia hybrida (Petunia) protein is Calmodulin-2 (CAM72).